We begin with the raw amino-acid sequence, 93 residues long: YcgL domain-containing protein AHA_2135 (93 aa).

The YcgL domain maps to 1–85 (MLCAVYKSRK…PPENLLEQHK (85 aa)).

The protein is YcgL domain-containing protein AHA_2135 of Aeromonas hydrophila subsp. hydrophila (strain ATCC 7966 / DSM 30187 / BCRC 13018 / CCUG 14551 / JCM 1027 / KCTC 2358 / NCIMB 9240 / NCTC 8049).